Here is a 722-residue protein sequence, read N- to C-terminus: 1,4-alpha-glucan branching enzyme GlgB (722 aa).

Catalysis depends on D401, which acts as the Nucleophile. E454 (proton donor) is an active-site residue.

It belongs to the glycosyl hydrolase 13 family. GlgB subfamily. In terms of assembly, monomer.

The catalysed reaction is Transfers a segment of a (1-&gt;4)-alpha-D-glucan chain to a primary hydroxy group in a similar glucan chain.. It functions in the pathway glycan biosynthesis; glycogen biosynthesis. Catalyzes the formation of the alpha-1,6-glucosidic linkages in glycogen by scission of a 1,4-alpha-linked oligosaccharide from growing alpha-1,4-glucan chains and the subsequent attachment of the oligosaccharide to the alpha-1,6 position. This chain is 1,4-alpha-glucan branching enzyme GlgB, found in Rubrobacter xylanophilus (strain DSM 9941 / JCM 11954 / NBRC 16129 / PRD-1).